Reading from the N-terminus, the 432-residue chain is MAETVHSPIVTYASMLSLLAFCPPFVILLWYTMVHQDGSVTQTFGFFWENGVQGLINIWPRPTLIAWKIIFCYGAFEAILQLLLPGKRVEGPISPAGNRPVYKANGLAAYFVTLATYLGLWWFGIFNPAIVYDHLGEIFSALIFGSFIFCVLLYIKGHVAPSSSDSGSCGNLIIDFYWGMELYPRIGKSFDIKVFTNCRFGMMSWAVLAVTYCIKQYEINGKVSDSMLVNTILMLVYVTKFFWWEAGYWNTMDIAHDRAGFYICWGCLVWVPSVYTSPGMYLVNHPVELGTQLAIYILVAGILCIYINYDCDRQRQEFRRTNGKCLVWGRAPSKIVASYTTTSGETKTSLLLTSGWWGLARHFHYVPEILSAFFWTVPALFDNFLAYFYVIFLTLLLFDRAKRDDDRCRSKYGKYWKLYCEKVKYRIIPGIY.

9 helical membrane-spanning segments follow: residues 12–34 (YASM…YTMV), 64–86 (LIAW…LLPG), 107–126 (LAAY…FGIF), 136–155 (GEIF…LLYI), 195–212 (FTNC…AVTY), 227–249 (MLVN…AGYW), 261–283 (FYIC…MYLV), 287–309 (VELG…YINY), and 371–393 (SAFF…VIFL).

The protein belongs to the ERG4/ERG24 family.

Its subcellular location is the endoplasmic reticulum membrane. The catalysed reaction is cholesterol + NADP(+) = 7-dehydrocholesterol + NADPH + H(+). It participates in lipid metabolism; steroid biosynthesis. Production of cholesterol by reduction of C7-C8 double bond of 7-dehydrocholesterol (7-DHC). Lesions in the gene coding for the enzyme cause dwarfism. The protein is 7-dehydrocholesterol reductase (DWF5) of Arabidopsis thaliana (Mouse-ear cress).